The following is a 345-amino-acid chain: N-acetyl-gamma-glutamyl-phosphate reductase (345 aa).

Cys149 is an active-site residue.

The protein belongs to the NAGSA dehydrogenase family. Type 1 subfamily.

Its subcellular location is the cytoplasm. The enzyme catalyses N-acetyl-L-glutamate 5-semialdehyde + phosphate + NADP(+) = N-acetyl-L-glutamyl 5-phosphate + NADPH + H(+). Its pathway is amino-acid biosynthesis; L-arginine biosynthesis; N(2)-acetyl-L-ornithine from L-glutamate: step 3/4. Catalyzes the NADPH-dependent reduction of N-acetyl-5-glutamyl phosphate to yield N-acetyl-L-glutamate 5-semialdehyde. The chain is N-acetyl-gamma-glutamyl-phosphate reductase from Desulforapulum autotrophicum (strain ATCC 43914 / DSM 3382 / VKM B-1955 / HRM2) (Desulfobacterium autotrophicum).